We begin with the raw amino-acid sequence, 332 residues long: Biotin synthase (332 aa).

In terms of domain architecture, Radical SAM core spans 51–279 (YKVQLASLLS…RSRVRLSAGR (229 aa)). Residues C66, C70, and C73 each contribute to the [4Fe-4S] cluster site. The [2Fe-2S] cluster site is built by C110, C142, C202, and R274.

It belongs to the radical SAM superfamily. Biotin synthase family. In terms of assembly, homodimer. The cofactor is [4Fe-4S] cluster. Requires [2Fe-2S] cluster as cofactor.

The enzyme catalyses (4R,5S)-dethiobiotin + (sulfur carrier)-SH + 2 reduced [2Fe-2S]-[ferredoxin] + 2 S-adenosyl-L-methionine = (sulfur carrier)-H + biotin + 2 5'-deoxyadenosine + 2 L-methionine + 2 oxidized [2Fe-2S]-[ferredoxin]. It participates in cofactor biosynthesis; biotin biosynthesis; biotin from 7,8-diaminononanoate: step 2/2. In terms of biological role, catalyzes the conversion of dethiobiotin (DTB) to biotin by the insertion of a sulfur atom into dethiobiotin via a radical-based mechanism. This is Biotin synthase from Prochlorococcus marinus (strain SARG / CCMP1375 / SS120).